The primary structure comprises 311 residues: GTP cyclohydrolase FolE2 (311 aa).

This sequence belongs to the GTP cyclohydrolase IV family.

It carries out the reaction GTP + H2O = 7,8-dihydroneopterin 3'-triphosphate + formate + H(+). It functions in the pathway cofactor biosynthesis; 7,8-dihydroneopterin triphosphate biosynthesis; 7,8-dihydroneopterin triphosphate from GTP: step 1/1. Its function is as follows. Converts GTP to 7,8-dihydroneopterin triphosphate. The sequence is that of GTP cyclohydrolase FolE2 from Xanthomonas campestris pv. campestris (strain B100).